We begin with the raw amino-acid sequence, 318 residues long: Olfactory receptor 51E1 (318 aa).

Residues 1-31 (MMVDPNGNESSATYFILIGLPGLEEAQFWLA) are Extracellular-facing. The N-linked (GlcNAc...) asparagine glycan is linked to asparagine 8. Residues 32–52 (FPLCSLYLIAVLGNLTIIYIV) form a helical membrane-spanning segment. Over 53-60 (RTEHSLHE) the chain is Cytoplasmic. A helical transmembrane segment spans residues 61-81 (PMYIFLCMLSGIDILISTSSM). At 82–100 (PKMLAIFWFNSTTIQFDAC) the chain is on the extracellular side. The N-linked (GlcNAc...) asparagine glycan is linked to asparagine 91. A disulfide bridge links cysteine 100 with cysteine 182. A helical transmembrane segment spans residues 101–123 (LLQMFAIHSLSGMESTVLLAMAF). Over 124–145 (DRYVAICHPLRHATVLTLPRVT) the chain is Cytoplasmic. A helical membrane pass occupies residues 146 to 166 (KIGVAAVVRGAALMAPLPVFI). At 167–198 (KQLPFCRSNILSHSYCLHQDVMKLACDDIRVN) the chain is on the extracellular side. A helical transmembrane segment spans residues 199 to 219 (VVYGLIVIISAIGLDSLLISF). At 220–239 (SYLLILKTVLGLTREAQAKA) the chain is on the cytoplasmic side. A helical membrane pass occupies residues 240-260 (FGTCVSHVCAVFIFYVPFIGL). Topologically, residues 261 to 275 (SMVHRFSKRRDSPLP) are extracellular. A helical transmembrane segment spans residues 276–296 (VILANIYLLVPPVLNPIVYGV). Topologically, residues 297–318 (KTKEIRQRILRLFHVATHASEP) are cytoplasmic.

Belongs to the G-protein coupled receptor 1 family. In terms of tissue distribution, highly expressed in prostate. Very low levels may be detected in some other tissues, such as placenta, skeletal muscle, heart, ovary and testis. Up-regulated in prostate cancers.

It is found in the cell membrane. Odorant receptor. This Homo sapiens (Human) protein is Olfactory receptor 51E1 (OR51E1).